A 245-amino-acid chain; its full sequence is Lactate utilization protein A (245 aa).

It belongs to the LutA/YkgE family.

Functionally, is involved in L-lactate degradation and allows cells to grow with lactate as the sole carbon source. This is Lactate utilization protein A from Macrococcus caseolyticus (strain JCSC5402) (Macrococcoides caseolyticum).